The following is a 61-amino-acid chain: Metallothionein-2 (61 aa).

Met1 is modified (N-acetylmethionine). The beta stretch occupies residues 1 to 29; it reads MDPNCSCAAGGSCTCAGSCKCKECRCTSC. 18 residues coordinate a divalent metal cation: Cys5, Cys7, Cys13, Cys15, Cys19, Cys21, Cys24, Cys26, Cys29, Cys33, Cys34, Cys36, Cys37, Cys41, Cys44, Cys48, Cys50, and Cys57. An alpha region spans residues 30–61; the sequence is KKSCCSCCPVGCAKCAQGCICKGASDKCSCCA. Ser58 is modified (phosphoserine). A divalent metal cation contacts are provided by Cys59 and Cys60.

Belongs to the metallothionein superfamily. Type 1 family. As to quaternary structure, interacts with EOLA1.

Functionally, metallothioneins have a high content of cysteine residues that bind various heavy metals; these proteins are transcriptionally regulated by both heavy metals and glucocorticoids. This Canis lupus familiaris (Dog) protein is Metallothionein-2 (MT2A).